Reading from the N-terminus, the 282-residue chain is Biotin synthase (282 aa).

Positions 1–228 constitute a Radical SAM core domain; the sequence is MQEIFLCSIS…NARLMVAGGR (228 aa). Positions 17, 21, and 24 each coordinate [4Fe-4S] cluster. [2Fe-2S] cluster-binding residues include cysteine 61, cysteine 96, cysteine 154, and arginine 221.

The protein belongs to the radical SAM superfamily. Biotin synthase family. Homodimer. It depends on [4Fe-4S] cluster as a cofactor. [2Fe-2S] cluster serves as cofactor.

The catalysed reaction is (4R,5S)-dethiobiotin + (sulfur carrier)-SH + 2 reduced [2Fe-2S]-[ferredoxin] + 2 S-adenosyl-L-methionine = (sulfur carrier)-H + biotin + 2 5'-deoxyadenosine + 2 L-methionine + 2 oxidized [2Fe-2S]-[ferredoxin]. It participates in cofactor biosynthesis; biotin biosynthesis; biotin from 7,8-diaminononanoate: step 2/2. Catalyzes the conversion of dethiobiotin (DTB) to biotin by the insertion of a sulfur atom into dethiobiotin via a radical-based mechanism. The chain is Biotin synthase from Helicobacter pylori (strain P12).